The chain runs to 296 residues: 4-diphosphocytidyl-2-C-methyl-D-erythritol kinase (296 aa).

Lysine 13 is a catalytic residue. Position 104-114 (proline 104–serine 114) interacts with ATP. Residue aspartate 146 is part of the active site.

It belongs to the GHMP kinase family. IspE subfamily.

It carries out the reaction 4-CDP-2-C-methyl-D-erythritol + ATP = 4-CDP-2-C-methyl-D-erythritol 2-phosphate + ADP + H(+). Its pathway is isoprenoid biosynthesis; isopentenyl diphosphate biosynthesis via DXP pathway; isopentenyl diphosphate from 1-deoxy-D-xylulose 5-phosphate: step 3/6. Functionally, catalyzes the phosphorylation of the position 2 hydroxy group of 4-diphosphocytidyl-2C-methyl-D-erythritol. In Hahella chejuensis (strain KCTC 2396), this protein is 4-diphosphocytidyl-2-C-methyl-D-erythritol kinase.